The following is a 242-amino-acid chain: ATP-dependent dethiobiotin synthetase BioD (242 aa).

An ATP-binding site is contributed by 12 to 17 (EVGKTV). Residue Thr-16 participates in Mg(2+) binding. Lys-37 is an active-site residue. Position 41 (Ser-41) interacts with substrate. ATP is bound by residues Asp-51 and 112–115 (EGAG). 2 residues coordinate Mg(2+): Asp-51 and Glu-112.

This sequence belongs to the dethiobiotin synthetase family. In terms of assembly, homodimer. It depends on Mg(2+) as a cofactor.

Its subcellular location is the cytoplasm. The enzyme catalyses (7R,8S)-7,8-diammoniononanoate + CO2 + ATP = (4R,5S)-dethiobiotin + ADP + phosphate + 3 H(+). Its pathway is cofactor biosynthesis; biotin biosynthesis; biotin from 7,8-diaminononanoate: step 1/2. In terms of biological role, catalyzes a mechanistically unusual reaction, the ATP-dependent insertion of CO2 between the N7 and N8 nitrogen atoms of 7,8-diaminopelargonic acid (DAPA, also called 7,8-diammoniononanoate) to form a ureido ring. This chain is ATP-dependent dethiobiotin synthetase BioD, found in Bacillus cereus (strain AH820).